The chain runs to 183 residues: A-type ATP synthase subunit E (183 aa).

Belongs to the V-ATPase E subunit family. Has multiple subunits, A(3), B(3), C, D, E, F, G, I and K(x); there may be a few other subunits as well.

The protein resides in the cell membrane. In terms of biological role, component of the A-type ATP synthase that produces ATP from ADP in the presence of a proton gradient across the membrane. This is A-type ATP synthase subunit E from Methanosarcina mazei (strain ATCC BAA-159 / DSM 3647 / Goe1 / Go1 / JCM 11833 / OCM 88) (Methanosarcina frisia).